The chain runs to 352 residues: Tropomodulin-3 (352 aa).

At Ser25 the chain carries Phosphoserine.

This sequence belongs to the tropomodulin family. Binds to the N-terminus of tropomyosin and to actin. Interacts with FLII. In terms of tissue distribution, ubiquitous.

Its subcellular location is the cytoplasm. It localises to the cytoskeleton. Functionally, blocks the elongation and depolymerization of the actin filaments at the pointed end. The Tmod/TM complex contributes to the formation of the short actin protofilament, which in turn defines the geometry of the membrane skeleton. The sequence is that of Tropomodulin-3 (Tmod3) from Mus musculus (Mouse).